The sequence spans 734 residues: Amino-acid acetyltransferase, mitochondrial (734 aa).

The tract at residues 384–433 (YSETSSRSTRAEADSNFNLRDDIPLSSFTEQKSGELEYSPRHQNDSPTQQ) is disordered. Basic and acidic residues-rich tracts occupy residues 392-406 (TRAEADSNFNLRDDI) and 415-427 (KSGELEYSPRHQN). In terms of domain architecture, N-acetyltransferase spans 555-724 (GVPQISLTDP…YEAVCKTIEP (170 aa)).

It belongs to the acetyltransferase family.

The protein resides in the mitochondrion. It catalyses the reaction L-glutamate + acetyl-CoA = N-acetyl-L-glutamate + CoA + H(+). The protein operates within amino-acid biosynthesis; L-arginine biosynthesis; N(2)-acetyl-L-ornithine from L-glutamate: step 1/4. Its function is as follows. N-acetylglutamate synthase involved in arginine biosynthesis. In Botryotinia fuckeliana (strain B05.10) (Noble rot fungus), this protein is Amino-acid acetyltransferase, mitochondrial (arg2).